We begin with the raw amino-acid sequence, 433 residues long: Protein CLP1 homolog (433 aa).

Residues Glu-22, Arg-61, and Asp-128 to Thr-133 contribute to the ATP site.

It belongs to the Clp1 family. Clp1 subfamily.

The protein localises to the nucleus. Functionally, required for endonucleolytic cleavage during polyadenylation-dependent pre-mRNA 3'-end formation. In Brugia malayi (Filarial nematode worm), this protein is Protein CLP1 homolog.